Reading from the N-terminus, the 1139-residue chain is Autophagy-related protein 23 (1139 aa).

9 disordered regions span residues 1 to 148 (MFQR…EMSP), 225 to 327 (STDK…YDDE), 356 to 388 (LTTA…SVKD), 475 to 569 (KNEK…DTAG), 648 to 674 (KKIS…KTEY), 720 to 767 (RQES…RETE), 786 to 828 (EDAQ…SKLR), 935 to 961 (AAVE…TEDL), and 977 to 1012 (HERD…ELRT). A compositionally biased stretch (basic and acidic residues) spans 7-18 (SAIDRTIAEEQA). Over residues 19 to 37 (RQQTATQSRSPSRTGSTSS) the composition is skewed to low complexity. 2 coiled-coil regions span residues 142 to 170 (KLQE…LLRS) and 215 to 259 (DMVM…STDQ). 4 stretches are compositionally biased toward basic and acidic residues: residues 225–247 (STDK…KLEE), 261–273 (KTSD…DAQD), 373–385 (ATRE…DVAS), and 475–494 (KNEK…KLES). A coiled-coil region spans residues 323–495 (SYDDEIPQLQ…TDLTKKLESK (173 aa)). A compositionally biased stretch (low complexity) spans 496–522 (PAPAMLTPAATPMPTVLQPAATSATAA). Residues 526 to 537 (GKKKNNKKKKGK) show a composition bias toward basic residues. Positions 566-1067 (DTAGNAELKA…AAQTKLVASS (502 aa)) form a coiled coil. Residues 651–661 (SSSTSDAEASS) are compositionally biased toward low complexity. Basic and acidic residues-rich tracts occupy residues 728–767 (ATKE…RETE), 786–815 (EDAQ…KAEQ), 935–945 (AAVEERDRIED), and 977–1011 (HERD…DELR). A GRIP domain is found at 1082–1132 (SPAGAPDTVYLKTILLQFLEQKDTKLRAQLVPVLGKLLRFDKTDEQKWQKA).

Belongs to the ATG23 family. Forms a complex with ATG9 and ATG27.

It is found in the cytoplasm. The protein localises to the preautophagosomal structure membrane. In terms of biological role, required for cytoplasm to vacuole transport (Cvt) vesicle formation and efficient autophagy. Plays a role in ATG protein retrieval from the pre-autophagosomal structure (PAS) and is especially required for autophagy-dependent cycling of ATG9. Autophagy is required for proper vegetative growth, asexual/sexual reproduction, and full virulence. Autophagy is particularly involved in the biosynthesis of deoxynivalenol (DON), an important virulence determinant. The chain is Autophagy-related protein 23 from Gibberella zeae (strain ATCC MYA-4620 / CBS 123657 / FGSC 9075 / NRRL 31084 / PH-1) (Wheat head blight fungus).